Consider the following 124-residue polypeptide: Small ribosomal subunit protein uS12 (124 aa).

Residues 105 to 124 are disordered; sequence SGVNDRRQGRSKYGAKRPKS. Positions 113-124 are enriched in basic residues; the sequence is GRSKYGAKRPKS.

This sequence belongs to the universal ribosomal protein uS12 family. Part of the 30S ribosomal subunit. Contacts proteins S8 and S17. May interact with IF1 in the 30S initiation complex.

Functionally, with S4 and S5 plays an important role in translational accuracy. Its function is as follows. Interacts with and stabilizes bases of the 16S rRNA that are involved in tRNA selection in the A site and with the mRNA backbone. Located at the interface of the 30S and 50S subunits, it traverses the body of the 30S subunit contacting proteins on the other side and probably holding the rRNA structure together. The combined cluster of proteins S8, S12 and S17 appears to hold together the shoulder and platform of the 30S subunit. The chain is Small ribosomal subunit protein uS12 from Idiomarina loihiensis (strain ATCC BAA-735 / DSM 15497 / L2-TR).